Consider the following 793-residue polypeptide: Signal transducer and activator of transcription 5A (793 aa).

Position 90 is a phosphotyrosine (Tyr-90). Ser-128 bears the Phosphoserine mark. An SH2 domain is found at 589 to 686 (WNDGAILGFV…EVFAKYYTPV (98 aa)). Phosphotyrosine is present on residues Tyr-682 and Tyr-694. At Ser-779 the chain carries Phosphoserine.

It belongs to the transcription factor STAT family. As to quaternary structure, forms a homodimer or a heterodimer with a related family member. Interacts with NCOA1 and SOCS7. Binds NR3C1. Interacts with ERBB4. Interacts with EBF4. Interacts with CD69. Post-translationally, ISGylated. Tyrosine phosphorylated in response to KITLG/SCF, IL2, IL3, IL7, IL15, CSF2/GMCSF, GH1, PRL, EPO and THPO. Activated KIT promotes phosphorylation on tyrosine residues and subsequent translocation to the nucleus. Tyrosine phosphorylated in response to constitutively activated FGFR1, FGFR2, FGFR3 and FGFR4. Tyrosine phosphorylation is required for DNA-binding activity and dimerization. Serine phosphorylation is also required for maximal transcriptional activity. Tyrosine phosphorylated in response to signaling via activated FLT3; wild-type FLT3 results in much weaker phosphorylation than constitutively activated mutant FLT3. Alternatively, can be phosphorylated by JAK2 at Tyr-694. In the virgin, found in most tissues except brain and muscle. During lactation, abundantly found in mammary tissue, as well as in other secretory organs such as salivary gland and seminal vesicle.

The protein resides in the cytoplasm. Its subcellular location is the nucleus. In terms of biological role, carries out a dual function: signal transduction and activation of transcription. Mediates cellular responses to the cytokine KITLG/SCF and other growth factors. May mediate cellular responses to activated FGFR1, FGFR2, FGFR3 and FGFR4. Binds to the GAS element and activates PRL-induced transcription. Regulates the expression of milk proteins during lactation. The polypeptide is Signal transducer and activator of transcription 5A (Stat5a) (Mus musculus (Mouse)).